We begin with the raw amino-acid sequence, 255 residues long: ATP synthase subunit a (255 aa).

Transmembrane regions (helical) follow at residues 40–60, 109–129, 135–155, 163–183, 196–218, and 230–250; these read TEPIFMSLLIMVLFVLLASEV, LIGGSAAFIFFSNASALIPGV, NLNITIGCAVVVFVLFNYYGL, VAHLAGPKWYLAPLIFPIEVI, LMLNIGVDHLVASIFLGLVALFV, and IVVQTLVFCLLSCIYIGLATE.

Belongs to the ATPase A chain family. F-type ATPases have 2 components, CF(1) - the catalytic core - and CF(0) - the membrane proton channel. CF(1) has five subunits: alpha(3), beta(3), gamma(1), delta(1), epsilon(1). CF(0) has three main subunits: a(1), b(2) and c(9-12). The alpha and beta chains form an alternating ring which encloses part of the gamma chain. CF(1) is attached to CF(0) by a central stalk formed by the gamma and epsilon chains, while a peripheral stalk is formed by the delta and b chains.

Its subcellular location is the cell inner membrane. Key component of the proton channel; it plays a direct role in the translocation of protons across the membrane. In Sorangium cellulosum (strain So ce56) (Polyangium cellulosum (strain So ce56)), this protein is ATP synthase subunit a.